The chain runs to 468 residues: Secreted triacylglycerol lipase LIP7 (468 aa).

Residues 1–21 (MFPRQILVFAALGLCFALVAG) form the signal peptide. Cys-125 and Cys-295 are disulfide-bonded. Ser-209 acts as the Nucleophile in catalysis. Residues Asp-355 and His-389 contribute to the active site.

It belongs to the AB hydrolase superfamily. Lipase family. Class Lip subfamily.

It localises to the secreted. The protein resides in the cell wall. The enzyme catalyses a triacylglycerol + H2O = a diacylglycerol + a fatty acid + H(+). It catalyses the reaction a monoacylglycerol + H2O = glycerol + a fatty acid + H(+). It carries out the reaction a diacylglycerol + H2O = a monoacylglycerol + a fatty acid + H(+). Secreted lipase involved in Dandruff and seborrheic dermatitis (D/SD) probably via lipase-mediated breakdown of sebaceous lipids and release of irritating free fatty acids. Has triacylglycerol lipase activity and is able to hydrolyze triolein. Mostly converts monoolein to di- and triolein, while free fatty acids are only produced in low amounts. This Malassezia globosa (strain ATCC MYA-4612 / CBS 7966) (Dandruff-associated fungus) protein is Secreted triacylglycerol lipase LIP7.